The chain runs to 107 residues: Metallothionein-1 (107 aa).

A propeptide spanning residues 1-2 (MD) is cleaved from the precursor.

Belongs to the metallothionein superfamily. Type 7 family.

The metallothioneins are involved in the cellular sequestration of toxic metal ions. Binds 12 cadmium ions per molecule. The protein is Metallothionein-1 of Tetrahymena pyriformis.